The chain runs to 60 residues: Probable tautomerase SP_1017 (60 aa).

Pro2 acts as the Proton acceptor; via imino nitrogen in catalysis.

Belongs to the 4-oxalocrotonate tautomerase family.

The sequence is that of Probable tautomerase SP_1017 from Streptococcus pneumoniae serotype 4 (strain ATCC BAA-334 / TIGR4).